A 73-amino-acid polypeptide reads, in one-letter code: Toxin Td7 (73 aa).

The signal sequence occupies residues 1-7 (IGMAVEC). Positions 8 to 70 (KDGYLVGADG…VWDSATNRCG (63 aa)) constitute an LCN-type CS-alpha/beta domain. 4 cysteine pairs are disulfide-bonded: cysteine 18-cysteine 69, cysteine 22-cysteine 44, cysteine 30-cysteine 50, and cysteine 34-cysteine 52. Lysine 71 bears the Lysine amide mark.

This sequence belongs to the long (4 C-C) scorpion toxin superfamily. Sodium channel inhibitor family. Beta subfamily. In terms of tissue distribution, expressed by the venom gland.

Its subcellular location is the secreted. Beta toxins bind voltage-independently at site-4 of sodium channels (Nav) and shift the voltage of activation toward more negative potentials thereby affecting sodium channel activation and promoting spontaneous and repetitive firing. This chain is Toxin Td7, found in Tityus discrepans (Venezuelan scorpion).